The primary structure comprises 505 residues: Sodium-coupled neutral amino acid transporter 3 (505 aa).

The disordered stretch occupies residues Val27–Leu48. Positions Gln33–Glu43 are enriched in basic and acidic residues. An N-linked (GlcNAc...) asparagine glycan is attached at Asn73. The next 5 membrane-spanning stretches (helical) occupy residues Gly82–Leu102, Val105–Ile125, Ala143–Ile163, Met186–Met206, and Leu212–Tyr232. A disulfide bridge connects residues Cys239 and Cys276. 2 N-linked (GlcNAc...) asparagine glycosylation sites follow: Asn247 and Asn251. A helical transmembrane segment spans residues Ala288–Tyr308. The N-linked (GlcNAc...) asparagine glycan is linked to Asn324. 5 consecutive transmembrane segments (helical) span residues Leu325–Phe345, Ile367–Phe387, Val409–Ile429, Ile432–Phe452, and Ala472–Ile492.

The protein belongs to the amino acid/polyamine transporter 2 family. As to expression, expressed predominantly in liver, moderately expressed in kidney and brain, and barely detectable in heart and muscle. Within liver, expressed in hepatocytes. Not detected in testis. Expressed in cells of the ganglion cell layer, in soma of some cells of the inner nuclear layer (at protein level). Expressed in the inner segments of photoreceptor cells.

Its subcellular location is the cell membrane. The protein resides in the basolateral cell membrane. The catalysed reaction is L-histidine(out) + Na(+)(out) + H(+)(in) = L-histidine(in) + Na(+)(in) + H(+)(out). The enzyme catalyses L-glutamine(out) + Na(+)(out) + H(+)(in) = L-glutamine(in) + Na(+)(in) + H(+)(out). It carries out the reaction L-asparagine(out) + Na(+)(out) + H(+)(in) = L-asparagine(in) + Na(+)(in) + H(+)(out). Its function is as follows. Symporter that cotransports specific neutral amino acids and sodium ions, coupled to an H(+) antiporter activity. Mainly participates in the glutamate-GABA-glutamine cycle in brain where it transports L-glutamine from astrocytes in the intercellular space for the replenishment of both neurotransmitters glutamate and gamma-aminobutyric acid (GABA) in neurons and also functions as the major influx transporter in ganglion cells mediating the uptake of glutamine. The transport activity is specific for L-glutamine, L-histidine and L-asparagine. The transport is electroneutral coupled to the cotransport of 1 Na(+) and the antiport of 1 H(+). The transport is pH dependent, saturable, Li(+) tolerant and functions in both direction depending on the concentration gradients of its substrates and cotransported ions. Also mediates an amino acid-gated H(+) conductance that is not stoichiometrically coupled to the amino acid transport but which influences the ionic gradients that drive the amino acid transport. In addition, may play a role in nitrogen metabolism, amino acid homeostasis, glucose metabolism and renal ammoniagenesis. This is Sodium-coupled neutral amino acid transporter 3 from Mus musculus (Mouse).